The chain runs to 172 residues: 3-hydroxydecanoyl-[acyl-carrier-protein] dehydratase (172 aa).

Residue His-71 is part of the active site.

Belongs to the thioester dehydratase family. FabA subfamily. Homodimer.

Its subcellular location is the cytoplasm. The enzyme catalyses a (3R)-hydroxyacyl-[ACP] = a (2E)-enoyl-[ACP] + H2O. The catalysed reaction is (3R)-hydroxydecanoyl-[ACP] = (2E)-decenoyl-[ACP] + H2O. It catalyses the reaction (2E)-decenoyl-[ACP] = (3Z)-decenoyl-[ACP]. Its pathway is lipid metabolism; fatty acid biosynthesis. In terms of biological role, necessary for the introduction of cis unsaturation into fatty acids. Catalyzes the dehydration of (3R)-3-hydroxydecanoyl-ACP to E-(2)-decenoyl-ACP and then its isomerization to Z-(3)-decenoyl-ACP. Can catalyze the dehydratase reaction for beta-hydroxyacyl-ACPs with saturated chain lengths up to 16:0, being most active on intermediate chain length. The polypeptide is 3-hydroxydecanoyl-[acyl-carrier-protein] dehydratase (Edwardsiella ictaluri (strain 93-146)).